A 210-amino-acid polypeptide reads, in one-letter code: Imidazoleglycerol-phosphate dehydratase (210 aa).

Positions 1–23 are disordered; it reads MNDSLLSNGHAPPLRQATVDRQT.

Belongs to the imidazoleglycerol-phosphate dehydratase family.

It is found in the cytoplasm. It catalyses the reaction D-erythro-1-(imidazol-4-yl)glycerol 3-phosphate = 3-(imidazol-4-yl)-2-oxopropyl phosphate + H2O. It functions in the pathway amino-acid biosynthesis; L-histidine biosynthesis; L-histidine from 5-phospho-alpha-D-ribose 1-diphosphate: step 6/9. The sequence is that of Imidazoleglycerol-phosphate dehydratase from Thermosynechococcus vestitus (strain NIES-2133 / IAM M-273 / BP-1).